The chain runs to 315 residues: Probable cell division protein WhiA (315 aa).

Positions 280-313 (SLKELGQMLDPQVGKSGINHRLRKIEKIAEELRT) form a DNA-binding region, H-T-H motif.

Belongs to the WhiA family.

Involved in cell division and chromosome segregation. In Clostridium botulinum (strain Alaska E43 / Type E3), this protein is Probable cell division protein WhiA.